A 297-amino-acid chain; its full sequence is UDP-N-acetylenolpyruvoylglucosamine reductase (297 aa).

The FAD-binding PCMH-type domain occupies 27-192; that stretch reads IGGPADALLE…LRAAYRLHPG (166 aa). Arg170 is an active-site residue. Ser220 (proton donor) is an active-site residue. Residue Glu290 is part of the active site.

The protein belongs to the MurB family. Requires FAD as cofactor.

It localises to the cytoplasm. The catalysed reaction is UDP-N-acetyl-alpha-D-muramate + NADP(+) = UDP-N-acetyl-3-O-(1-carboxyvinyl)-alpha-D-glucosamine + NADPH + H(+). Its pathway is cell wall biogenesis; peptidoglycan biosynthesis. Functionally, cell wall formation. The chain is UDP-N-acetylenolpyruvoylglucosamine reductase from Rubrobacter xylanophilus (strain DSM 9941 / JCM 11954 / NBRC 16129 / PRD-1).